The sequence spans 853 residues: DNA mismatch repair protein MutS (853 aa).

Position 614–621 (614–621 (GPNMGGKS)) interacts with ATP.

The protein belongs to the DNA mismatch repair MutS family.

In terms of biological role, this protein is involved in the repair of mismatches in DNA. It is possible that it carries out the mismatch recognition step. This protein has a weak ATPase activity. This chain is DNA mismatch repair protein MutS, found in Citrobacter koseri (strain ATCC BAA-895 / CDC 4225-83 / SGSC4696).